Here is a 377-residue protein sequence, read N- to C-terminus: MKFELDTTQGRARRGRLIFERGTVETPAFMPVGTYGTVKGMTPEEVRATGADILLGNTFHLWLRPGEEIMRKHGDLHDFMNWQRPILTDSGGFQVFSLGDIRKITEEGVHFRSPINGEKIFLDPEKSMQIQDSLGSDVVMIFDECTPYPATEDEARKSMQMSLRWAQRSRDEFDRLENPNSLFGIIQGGVYEDLRDESLNGLVDIGFDGYAVGGLAVGEPKEDMHRILEHVCPKIPADKPRYLMGVGKPEDLVEGVRRGVDMFDCVMPTRNARNGHLFTSEGVIKIRNARHRDDTSPLDDKCDCYTCKNYSRAYLYHLDRCNEILGARLNTIHNLRYYQRLMEGLRGAIETGTLDAFVTEFYTSQGREVPEVPELTD.

Asp89 serves as the catalytic Proton acceptor. Substrate contacts are provided by residues 89–93, Asp143, Gln187, and Gly214; that span reads DSGGF. The interval 245–251 is RNA binding; the sequence is GVGKPED. Catalysis depends on Asp264, which acts as the Nucleophile. Residues 269–273 form an RNA binding; important for wobble base 34 recognition region; sequence TRNAR. Zn(2+) contacts are provided by Cys302, Cys304, Cys307, and His333.

The protein belongs to the queuine tRNA-ribosyltransferase family. As to quaternary structure, homodimer. Within each dimer, one monomer is responsible for RNA recognition and catalysis, while the other monomer binds to the replacement base PreQ1. Zn(2+) is required as a cofactor.

The enzyme catalyses 7-aminomethyl-7-carbaguanine + guanosine(34) in tRNA = 7-aminomethyl-7-carbaguanosine(34) in tRNA + guanine. Its pathway is tRNA modification; tRNA-queuosine biosynthesis. In terms of biological role, catalyzes the base-exchange of a guanine (G) residue with the queuine precursor 7-aminomethyl-7-deazaguanine (PreQ1) at position 34 (anticodon wobble position) in tRNAs with GU(N) anticodons (tRNA-Asp, -Asn, -His and -Tyr). Catalysis occurs through a double-displacement mechanism. The nucleophile active site attacks the C1' of nucleotide 34 to detach the guanine base from the RNA, forming a covalent enzyme-RNA intermediate. The proton acceptor active site deprotonates the incoming PreQ1, allowing a nucleophilic attack on the C1' of the ribose to form the product. After dissociation, two additional enzymatic reactions on the tRNA convert PreQ1 to queuine (Q), resulting in the hypermodified nucleoside queuosine (7-(((4,5-cis-dihydroxy-2-cyclopenten-1-yl)amino)methyl)-7-deazaguanosine). The sequence is that of Queuine tRNA-ribosyltransferase from Shewanella halifaxensis (strain HAW-EB4).